The following is a 105-amino-acid chain: 3-phenylpropionate/cinnamic acid dioxygenase ferredoxin subunit (105 aa).

One can recognise a Rieske domain in the interval 4–99 (LFVCTVEELP…VVVKDGNIYI (96 aa)). Positions 42, 44, 62, and 65 each coordinate [2Fe-2S] cluster.

The protein belongs to the bacterial ring-hydroxylating dioxygenase ferredoxin component family. In terms of assembly, this dioxygenase system consists of four proteins: the two subunits of the hydroxylase component (HcaE and HcaF), a ferredoxin (HcaC) and a ferredoxin reductase (HcaD). [2Fe-2S] cluster serves as cofactor.

Its pathway is aromatic compound metabolism; 3-phenylpropanoate degradation. In terms of biological role, part of the multicomponent 3-phenylpropionate dioxygenase, that converts 3-phenylpropionic acid (PP) and cinnamic acid (CI) into 3-phenylpropionate-dihydrodiol (PP-dihydrodiol) and cinnamic acid-dihydrodiol (CI-dihydrodiol), respectively. This protein seems to be a 2Fe-2S ferredoxin. The polypeptide is 3-phenylpropionate/cinnamic acid dioxygenase ferredoxin subunit (Photorhabdus laumondii subsp. laumondii (strain DSM 15139 / CIP 105565 / TT01) (Photorhabdus luminescens subsp. laumondii)).